Here is a 185-residue protein sequence, read N- to C-terminus: Ribosome-recycling factor (185 aa).

It belongs to the RRF family.

Its subcellular location is the cytoplasm. In terms of biological role, responsible for the release of ribosomes from messenger RNA at the termination of protein biosynthesis. May increase the efficiency of translation by recycling ribosomes from one round of translation to another. The polypeptide is Ribosome-recycling factor (Teredinibacter turnerae (strain ATCC 39867 / T7901)).